The following is a 445-amino-acid chain: 23S rRNA (uracil(1939)-C(5))-methyltransferase RlmD (445 aa).

The tract at residues 1–21 (MARRRKQLPETPEPASIETLS) is disordered. One can recognise a TRAM domain in the interval 5–64 (RKQLPETPEPASIETLSHDGRGIARRDGKTTFIDNALPGEEVMFKFTYMRRKFDEGKAVE). [4Fe-4S] cluster is bound by residues Cys77, Cys83, Cys86, and Cys165. 6 residues coordinate S-adenosyl-L-methionine: Gln275, Phe304, Asn309, Glu325, Asp352, and Asp373. The active-site Nucleophile is the Cys399.

This sequence belongs to the class I-like SAM-binding methyltransferase superfamily. RNA M5U methyltransferase family. RlmD subfamily.

The enzyme catalyses uridine(1939) in 23S rRNA + S-adenosyl-L-methionine = 5-methyluridine(1939) in 23S rRNA + S-adenosyl-L-homocysteine + H(+). Its function is as follows. Catalyzes the formation of 5-methyl-uridine at position 1939 (m5U1939) in 23S rRNA. This is 23S rRNA (uracil(1939)-C(5))-methyltransferase RlmD from Alcanivorax borkumensis (strain ATCC 700651 / DSM 11573 / NCIMB 13689 / SK2).